We begin with the raw amino-acid sequence, 876 residues long: Serrate RNA effector molecule homolog (876 aa).

Residues 1 to 90 (MGDSDDEYDR…RRDWDEHSSD (90 aa)) are disordered. G2 bears the N-acetylglycine mark. S4 is modified (phosphoserine). Y8 bears the Phosphotyrosine mark. Basic and acidic residues predominate over residues 8–73 (YDRRRRDKFR…ERFSPPRHEL (66 aa)). 3 positions are modified to phosphoserine: S67, S74, and S136. K150 participates in a covalent cross-link: Glycyl lysine isopeptide (Lys-Gly) (interchain with G-Cter in SUMO2). The disordered stretch occupies residues 271–412 (EEEEEQAGKP…KPKDAAGLEC (142 aa)). The segment covering 297–347 (DGERKTNDKDEKKEDGKQAENDSSNDDKTKKSEGDGDKEEKKEDSEKEAKK) has biased composition (basic and acidic residues). Positions 370–387 (SESESESGQAEEEKEEAE) are enriched in acidic residues. A compositionally biased stretch (basic and acidic residues) spans 388–412 (EALKEKEKPKEEEWEKPKDAAGLEC). S493 and S540 each carry phosphoserine. Position 544 is a phosphothreonine (T544). The residue at position 570 (S570) is a Phosphoserine. The segment at 575–598 (ELLGSSGGAPPEEPPKEGNPAEIN) is disordered. The residue at position 671 (T671) is a Phosphothreonine. The residue at position 679 (S679) is a Phosphoserine. Residues R833, R840, and R850 each carry the omega-N-methylarginine modification. The interval 835–854 (NYDAFRGQGGYPGKPRNRMV) is disordered.

This sequence belongs to the ARS2 family. Interacts with NCBP1 and DROSHA. Interacts with CASP8AP2 and ERBB4. Interacts with LUZP4. Interacts with NCBP2/CBP20 and NCBP3. Interacts with MTREX. As to expression, ubiquitously expressed.

The protein resides in the nucleus. Its subcellular location is the nucleoplasm. It is found in the cytoplasm. In terms of biological role, acts as a mediator between the cap-binding complex (CBC) and the primary microRNAs (miRNAs) processing machinery during cell proliferation. Contributes to the stability and delivery of capped primary miRNA transcripts to the primary miRNA processing complex containing DGCR8 and DROSHA, thereby playing a role in RNA-mediated gene silencing (RNAi) by miRNAs. Binds capped RNAs (m7GpppG-capped RNA); however interaction is probably mediated via its interaction with NCBP1/CBP80 component of the CBC complex. Involved in cell cycle progression at S phase. Does not directly confer arsenite resistance but rather modulates arsenic sensitivity. Independently of its activity on miRNAs, necessary and sufficient to promote neural stem cell self-renewal. Does so by directly binding SOX2 promoter and positively regulating its transcription. The chain is Serrate RNA effector molecule homolog (SRRT) from Homo sapiens (Human).